Consider the following 383-residue polypeptide: N-acetyldiaminopimelate deacetylase (383 aa).

Aspartate 72 is an active-site residue. Catalysis depends on glutamate 131, which acts as the Proton acceptor.

It belongs to the peptidase M20A family. N-acetyldiaminopimelate deacetylase subfamily.

It catalyses the reaction N-acetyl-(2S,6S)-2,6-diaminopimelate + H2O = (2S,6S)-2,6-diaminopimelate + acetate. It functions in the pathway amino-acid biosynthesis; L-lysine biosynthesis via DAP pathway; LL-2,6-diaminopimelate from (S)-tetrahydrodipicolinate (acetylase route): step 3/3. Its function is as follows. Catalyzes the conversion of N-acetyl-diaminopimelate to diaminopimelate and acetate. The chain is N-acetyldiaminopimelate deacetylase from Lacticaseibacillus paracasei (strain ATCC 334 / BCRC 17002 / CCUG 31169 / CIP 107868 / KCTC 3260 / NRRL B-441) (Lactobacillus paracasei).